A 269-amino-acid polypeptide reads, in one-letter code: Regulatory protein RecX (269 aa).

Belongs to the RecX family.

Its subcellular location is the cytoplasm. Its function is as follows. Modulates RecA activity. In Geobacillus kaustophilus (strain HTA426), this protein is Regulatory protein RecX.